The following is a 109-amino-acid chain: Red pigment-concentrating prohormone (109 aa).

Positions 1-25 are cleaved as a signal peptide; that stretch reads MVRRSGVTLLVVALLVVTLMSSVSA. The residue at position 26 (Gln26) is a Pyrrolidone carboxylic acid. Trp33 carries the tryptophan amide modification. The interval 34-78 is disordered; sequence GKRAAGASGSNGGVGEAVSGLHPSVGGAPGGVVPPGSSSPGDSCG. 2 stretches are compositionally biased toward low complexity: residues 49–59 and 67–78; these read EAVSGLHPSVG and PPGSSSPGDSCG.

Belongs to the AKH/HRTH/RPCH family.

Its subcellular location is the secreted. In terms of biological role, this hormone adapts the animal to light backgrounds by stimulating concentration of the pigment of its red body-chromatophores. In Callinectes sapidus (Blue crab), this protein is Red pigment-concentrating prohormone.